Reading from the N-terminus, the 512-residue chain is Cytochrome P450 26B1 (512 aa).

Cysteine 441 serves as a coordination point for heme.

The protein belongs to the cytochrome P450 family. Requires heme as cofactor.

It localises to the endoplasmic reticulum membrane. The protein resides in the microsome membrane. It catalyses the reaction all-trans-retinoate + reduced [NADPH--hemoprotein reductase] + O2 = all-trans-4-hydroxyretinoate + oxidized [NADPH--hemoprotein reductase] + H2O + H(+). The enzyme catalyses all-trans-retinoate + reduced [NADPH--hemoprotein reductase] + O2 = all-trans-18-hydroxyretinoate + oxidized [NADPH--hemoprotein reductase] + H2O + H(+). In terms of biological role, a cytochrome P450 monooxygenase involved in the metabolism of retinoates (RAs), the active metabolites of vitamin A, and critical signaling molecules in animals. RAs exist as at least four different isomers: all-trans-RA (atRA), 9-cis-RA, 13-cis-RA, and 9,13-dicis-RA, where atRA is considered to be the biologically active isomer, although 9-cis-RA and 13-cis-RA also have activity. Catalyzes the hydroxylation of atRA primarily at C-4 and C-18, thereby contributing to the regulation of atRA homeostasis and signaling. Hydroxylation of atRA limits its biological activity and initiates a degradative process leading to its eventual elimination. Involved in the convertion of atRA to all-trans-4-oxo-RA. Can oxidize all-trans-13,14-dihydroretinoate (DRA) to metabolites which could include all-trans-4-oxo-DRA, all-trans-4-hydroxy-DRA, all-trans-5,8-epoxy-DRA, and all-trans-18-hydroxy-DRA. Shows preference for the following substrates: atRA &gt; 9-cis-RA &gt; 13-cis-RA. Plays a central role in germ cell development: acts by degrading RAs in the developing testis, preventing STRA8 expression, thereby leading to delay of meiosis. Required for the maintenance of the undifferentiated state of male germ cells during embryonic development in Sertoli cells, inducing arrest in G0 phase of the cell cycle and preventing meiotic entry. Plays a role in skeletal development, both at the level of patterning and in the ossification of bone and the establishment of some synovial joints. Essential for postnatal survival. Also has a significant activity in oxidation of tazarotenic acid and may therefore metabolize that xenobiotic in vivo. In Mus musculus (Mouse), this protein is Cytochrome P450 26B1 (Cyp26b1).